The following is a 183-amino-acid chain: Adenine phosphoribosyltransferase (183 aa).

The protein belongs to the purine/pyrimidine phosphoribosyltransferase family. Homodimer.

The protein localises to the cytoplasm. It catalyses the reaction AMP + diphosphate = 5-phospho-alpha-D-ribose 1-diphosphate + adenine. The protein operates within purine metabolism; AMP biosynthesis via salvage pathway; AMP from adenine: step 1/1. Functionally, catalyzes a salvage reaction resulting in the formation of AMP, that is energically less costly than de novo synthesis. The polypeptide is Adenine phosphoribosyltransferase (Salmonella gallinarum (strain 287/91 / NCTC 13346)).